Consider the following 241-residue polypeptide: Proteasome subunit alpha (241 aa).

The protein belongs to the peptidase T1A family. As to quaternary structure, the 20S proteasome core is composed of 14 alpha and 14 beta subunits that assemble into four stacked heptameric rings, resulting in a barrel-shaped structure. The two inner rings, each composed of seven catalytic beta subunits, are sandwiched by two outer rings, each composed of seven alpha subunits. The catalytic chamber with the active sites is on the inside of the barrel. Has a gated structure, the ends of the cylinder being occluded by the N-termini of the alpha-subunits. Is capped at one or both ends by the proteasome regulatory ATPase, PAN.

The protein resides in the cytoplasm. Its activity is regulated as follows. The formation of the proteasomal ATPase PAN-20S proteasome complex, via the docking of the C-termini of PAN into the intersubunit pockets in the alpha-rings, triggers opening of the gate for substrate entry. Interconversion between the open-gate and close-gate conformations leads to a dynamic regulation of the 20S proteasome proteolysis activity. Its function is as follows. Component of the proteasome core, a large protease complex with broad specificity involved in protein degradation. In Saccharolobus islandicus (strain M.16.4 / Kamchatka #3) (Sulfolobus islandicus), this protein is Proteasome subunit alpha.